A 294-amino-acid polypeptide reads, in one-letter code: ATP synthase gamma chain (294 aa).

Belongs to the ATPase gamma chain family. F-type ATPases have 2 components, CF(1) - the catalytic core - and CF(0) - the membrane proton channel. CF(1) has five subunits: alpha(3), beta(3), gamma(1), delta(1), epsilon(1). CF(0) has three main subunits: a, b and c.

The protein localises to the cell membrane. In terms of biological role, produces ATP from ADP in the presence of a proton gradient across the membrane. The gamma chain is believed to be important in regulating ATPase activity and the flow of protons through the CF(0) complex. This chain is ATP synthase gamma chain, found in Ruminiclostridium cellulolyticum (strain ATCC 35319 / DSM 5812 / JCM 6584 / H10) (Clostridium cellulolyticum).